Here is an 88-residue protein sequence, read N- to C-terminus: Homeobox protein knotted-1-like 2 (88 aa).

One can recognise an ELK domain in the interval E4–I24. Positions L25–N88 form a DNA-binding region, homeobox; TALE-type.

This sequence belongs to the TALE/KNOX homeobox family. As to expression, expressed in all tissues examined. Highest expression in leaves.

It localises to the nucleus. This Zea mays (Maize) protein is Homeobox protein knotted-1-like 2 (KNOX2).